We begin with the raw amino-acid sequence, 37 residues long: Large ribosomal subunit protein bL36 (37 aa).

This sequence belongs to the bacterial ribosomal protein bL36 family.

The polypeptide is Large ribosomal subunit protein bL36 (Symbiobacterium thermophilum (strain DSM 24528 / JCM 14929 / IAM 14863 / T)).